We begin with the raw amino-acid sequence, 175 residues long: Peptide methionine sulfoxide reductase MsrA (175 aa).

Cys-10 is an active-site residue.

This sequence belongs to the MsrA Met sulfoxide reductase family.

The enzyme catalyses L-methionyl-[protein] + [thioredoxin]-disulfide + H2O = L-methionyl-(S)-S-oxide-[protein] + [thioredoxin]-dithiol. It carries out the reaction [thioredoxin]-disulfide + L-methionine + H2O = L-methionine (S)-S-oxide + [thioredoxin]-dithiol. Functionally, has an important function as a repair enzyme for proteins that have been inactivated by oxidation. Catalyzes the reversible oxidation-reduction of methionine sulfoxide in proteins to methionine. This is Peptide methionine sulfoxide reductase MsrA from Clavibacter michiganensis subsp. michiganensis (strain NCPPB 382).